The primary structure comprises 261 residues: Phosphate import ATP-binding protein PstB 4 (261 aa).

Positions 8–256 (IKVNNLSFYY…PHDSRTREYV (249 aa)) constitute an ABC transporter domain. ATP is bound at residue 40 to 47 (GPSGCGKS).

The protein belongs to the ABC transporter superfamily. Phosphate importer (TC 3.A.1.7) family. As to quaternary structure, the complex is composed of two ATP-binding proteins (PstB), two transmembrane proteins (PstC and PstA) and a solute-binding protein (PstS).

The protein localises to the cell inner membrane. It catalyses the reaction phosphate(out) + ATP + H2O = ADP + 2 phosphate(in) + H(+). Its function is as follows. Part of the ABC transporter complex PstSACB involved in phosphate import. Responsible for energy coupling to the transport system. The polypeptide is Phosphate import ATP-binding protein PstB 4 (Trichormus variabilis (strain ATCC 29413 / PCC 7937) (Anabaena variabilis)).